The sequence spans 618 residues: Leucine aminopeptidase 2 (618 aa).

Residues 139 to 141 and 271 to 276 contribute to the a peptide site; these read QCQ and PYGGME. Histidine 300 serves as a coordination point for Zn(2+). Catalysis depends on glutamate 301, which acts as the Proton acceptor. Zn(2+)-binding residues include histidine 304 and glutamate 323. Tyrosine 389 serves as the catalytic Proton donor.

Belongs to the peptidase M1 family. Zn(2+) serves as cofactor.

The protein localises to the cytoplasm. It localises to the nucleus. It catalyses the reaction an epoxide + H2O = an ethanediol. Functionally, aminopeptidase that preferentially cleaves di- and tripeptides. Also has low epoxide hydrolase activity (in vitro). Can hydrolyze the epoxide leukotriene LTA(4) but it forms preferentially 5,6-dihydroxy-7,9,11,14-eicosatetraenoic acid rather than the cytokine leukotriene B(4) as the product compared to the homologous mammalian enzyme (in vitro). This chain is Leucine aminopeptidase 2, found in Aspergillus clavatus (strain ATCC 1007 / CBS 513.65 / DSM 816 / NCTC 3887 / NRRL 1 / QM 1276 / 107).